Here is a 635-residue protein sequence, read N- to C-terminus: Biosynthetic arginine decarboxylase (635 aa).

K100 is subject to N6-(pyridoxal phosphate)lysine. 282 to 292 (VDIGGGLGVDY) contacts substrate.

This sequence belongs to the Orn/Lys/Arg decarboxylase class-II family. SpeA subfamily. Mg(2+) is required as a cofactor. It depends on pyridoxal 5'-phosphate as a cofactor.

It catalyses the reaction L-arginine + H(+) = agmatine + CO2. It participates in amine and polyamine biosynthesis; agmatine biosynthesis; agmatine from L-arginine: step 1/1. Functionally, catalyzes the biosynthesis of agmatine from arginine. This is Biosynthetic arginine decarboxylase from Geotalea daltonii (strain DSM 22248 / JCM 15807 / FRC-32) (Geobacter daltonii).